Reading from the N-terminus, the 438-residue chain is Proline--tRNA ligase (438 aa).

This sequence belongs to the class-II aminoacyl-tRNA synthetase family. ProS type 2 subfamily. As to quaternary structure, homodimer.

The protein resides in the cytoplasm. The catalysed reaction is tRNA(Pro) + L-proline + ATP = L-prolyl-tRNA(Pro) + AMP + diphosphate. Its function is as follows. Catalyzes the attachment of proline to tRNA(Pro) in a two-step reaction: proline is first activated by ATP to form Pro-AMP and then transferred to the acceptor end of tRNA(Pro). This is Proline--tRNA ligase from Gluconobacter oxydans (strain 621H) (Gluconobacter suboxydans).